Here is a 514-residue protein sequence, read N- to C-terminus: GTPase Obg (514 aa).

Positions 2–159 constitute an Obg domain; that stretch reads ATFVDRVTVH…GDILLELKTV (158 aa). A disordered region spans residues 62-88; it reads RRPHRSSGNGGFGMGDHRSGHTGEDLE. Residues 76 to 85 show a composition bias toward basic and acidic residues; sequence GDHRSGHTGE. One can recognise an OBG-type G domain in the interval 160–336; sequence ADIALVGYPS…LSFALAELVE (177 aa). GTP is bound by residues 166–173, 191–195, 212–215, 288–291, and 317–319; these read GYPSAGKS, FTTLH, DVPG, NKID, and STV. Positions 173 and 193 each coordinate Mg(2+). The OCT domain maps to 356 to 440; sequence PKTVDDSGFV…ENGVVFDWEP (85 aa).

It belongs to the TRAFAC class OBG-HflX-like GTPase superfamily. OBG GTPase family. Monomer. Mg(2+) is required as a cofactor.

The protein resides in the cytoplasm. Its function is as follows. An essential GTPase which binds GTP, GDP and possibly (p)ppGpp with moderate affinity, with high nucleotide exchange rates and a fairly low GTP hydrolysis rate. Plays a role in control of the cell cycle, stress response, ribosome biogenesis and in those bacteria that undergo differentiation, in morphogenesis control. The chain is GTPase Obg from Leifsonia xyli subsp. xyli (strain CTCB07).